The primary structure comprises 317 residues: Bile salt hydrolase/transferase (317 aa).

The Nucleophile; acyl-thioester intermediate role is filled by C2. C2 and R18 together coordinate deoxycholate. N82 contributes to the taurine binding site.

The protein belongs to the peptidase C59 family. Homotetramer. The tetramer consists of a dimer of dimers.

The catalysed reaction is glycocholate + H2O = cholate + glycine. The enzyme catalyses glycodeoxycholate + H2O = deoxycholate + glycine. It catalyses the reaction chenodeoxycholate + glycine = glycochenodeoxycholate + H2O. It carries out the reaction cholate + taurine = taurocholate + H2O. The catalysed reaction is taurodeoxycholate + H2O = deoxycholate + taurine. The enzyme catalyses taurochenodeoxycholate + H2O = chenodeoxycholate + taurine. It catalyses the reaction an L-alpha-amino acid + cholate = an N-choloyl-L-alpha-amino acid + H2O. It carries out the reaction an L-alpha-amino acid + taurocholate = an N-choloyl-L-alpha-amino acid + taurine. The catalysed reaction is cholate + L-alanine = L-alanocholate + H2O. The enzyme catalyses taurocholate + L-alanine = L-alanocholate + taurine. It catalyses the reaction cholate + L-serine = L-serocholate + H2O. It carries out the reaction taurocholate + L-serine = L-serocholate + taurine. The catalysed reaction is cholate + L-histidine = L-histidocholate + H2O. The enzyme catalyses taurocholate + L-histidine = L-histidocholate + taurine. The protein operates within lipid metabolism; bile acid biosynthesis. Possesses dual functions in bile acid metabolism. Acts as a bile salt hydrolase that catalyzes the deconjugation of glycine- and taurine-linked bile salts, which occurs naturally in the intestines of humans, releasing amino acid residues and deconjugated bile salts (bile acids). Can hydrolyze the amide bond in all six major human conjugated bile salts, namely glycocholate (GCA), glycodeoxycholate (GDCA), glycochenodeoxycholate (GCDCA), taurocholate (TCA), taurodeoxycholate (TDCA) and taurochenodeoxycholate (TCDCA). Shows a slight preference for glycine-conjugated bile acids as substrates. Also acts as an amine N-acyltransferase that conjugates a wide variety of amino acids to conjugated and non-conjugated bile acids, thus producing bacterial bile acid amidates (BBAAs) - also named microbially conjugated bile acids (MCBAs) - in the gastrointestinal tract. These BBAAs may facilitate communication between the microbiota and host through the activation of human ligand-activated transcription factors. This is Bile salt hydrolase/transferase from Bifidobacterium longum subsp. longum (strain ATCC 15707 / DSM 20219 / JCM 1217 / NCTC 11818 / E194b).